The following is a 149-amino-acid chain: FAD synthase (149 aa).

Residues V9–F10, H14–H17, D93, and Y120 contribute to the ATP site.

It belongs to the archaeal FAD synthase family. As to quaternary structure, homodimer. A divalent metal cation is required as a cofactor.

It catalyses the reaction FMN + ATP + H(+) = FAD + diphosphate. Its pathway is cofactor biosynthesis; FAD biosynthesis; FAD from FMN: step 1/1. Functionally, catalyzes the transfer of the AMP portion of ATP to flavin mononucleotide (FMN) to produce flavin adenine dinucleotide (FAD) coenzyme. The chain is FAD synthase from Aciduliprofundum boonei (strain DSM 19572 / T469).